Consider the following 121-residue polypeptide: MDDLTTRLKALSSANEFLEFFGIAYEERVVHVNRLHILKRFYQYLHRAEGLAGLDDVEMFRRYRELLAQAYQDFTTSTAVKEKVFKVFQDADGQGHVSVTSLRDSLAERRKSAGGPELRAA.

The protein belongs to the NifW family. In terms of assembly, homotrimer; associates with NifD.

In terms of biological role, may protect the nitrogenase Fe-Mo protein from oxidative damage. The chain is Nitrogenase-stabilizing/protective protein NifW from Leptothrix cholodnii (strain ATCC 51168 / LMG 8142 / SP-6) (Leptothrix discophora (strain SP-6)).